The chain runs to 122 residues: MIEQLFPEVTCYALRYLDYSSLCQLSMTSSSMRKTANDDVLWRALYFQEFTEETNGGTPVNGWKAFFAVTKQVMTVNDKFFSILDSRSLPRMTSLWLNSDYVKCFNGSGELFTGYLLTYPLL.

The F-box domain occupies 1–45 (MIEQLFPEVTCYALRYLDYSSLCQLSMTSSSMRKTANDDVLWRAL).

The polypeptide is Probable F-box protein At4g23960 (Arabidopsis thaliana (Mouse-ear cress)).